The chain runs to 1077 residues: RNA polymerase-associated protein CTR9 (1077 aa).

16 TPR repeats span residues 56–89 (KEHWLTIALAYCNHGKTNEGIKLIEMALDVFQNS), 138–174 (IGNMLATVELYYQRGHYDKALETSDLFVKSIHAEDHR), 183–216 (CLFLLLRAKLLYQKKNYMASLKIFQELLVINPVL), 218–251 (PDPRIGIGLCFWQLKDSKMAIKSWQRALQLNPKN), 298–332 (PVLLTLLQTYYYFKGDYQTVLDIYHHRILKMSPMI), 338–371 (SESSFWCGRAHYALGDYRKSFIMFQESLKKNEDN), 373–405 (LAKLGLGQTQIKNNLLEESIITFENLYKTNESL), 421–455 (FDAKTAKNTSAKEQSNLNEKALKYLERYLKLTLAT), 462–495 (SRAYLVISQLYELQNQYKTSLDYLSKALEEMEFI), 501–534 (LEVLNNLACYHFINGDFIKADDLFKQAKAKVSDK), 540–572 (ITLEYNIARTNEKNDCEKSESIYSQVTSLHPAY), 664–697 (GKKSRNPKEQEKSKHSYLKAIQLYQKVLQVDPFN), 699–731 (FAAQGLAIIFAESKRLGPALEILRKVRDSLDNE), 732–764 (DVQLNLAHCYLEMREYGKAIENYELVLKKFDNE), 768–801 (PHILNLLGRAWYARAIKERSVNFYQKALENAKTA), and 830–863 (AETLRRSNPKFRTVQQIKDSLEGLKEGLELFREL). A compositionally biased stretch (basic and acidic residues) spans 959–980 (EREAMAISEHNVKDDSDLSDKD). Residues 959–1077 (EREAMAISEH…NDNDDNDGLF (119 aa)) are disordered. Phosphoserine is present on residues serine 1015 and serine 1017. Acidic residues-rich tracts occupy residues 1042–1051 (FIEDSDEEEA) and 1063–1077 (DNDENNDNDDNDGLF).

In terms of assembly, component of the PAF1 complex which consists of at least CDC73, CTR9, LEO1, PAF1 and RTF1. Interacts with SPT6. Interacts with FACT subunits POB3 and SPT16.

It localises to the nucleus. Its subcellular location is the nucleoplasm. In terms of biological role, the PAF1 complex is a multifunctional complex. Involved in transcription initiation via genetic interactions with TATA-binding proteins. Involved in elongation. It regulates 3'-end formation of snR47 by modulating the recruitment or stable association of NRD1 and NAB3 with RNA polymerase II. Also has a role in transcription-coupled histone modification. Required for activation of RAD6 ubiquitin conjugate and the BRE1 ubiquitin ligase which ubiquitinate 'Lys-126' histone H2B. Activates the SET1 histone methyltransferase complex for methylation of 'Lys-4' of histone H3 and for methylation of 'Lys-73' of histone H3 by DOT1 and 'Lys-36' of histone H3 by SET2. In complex with PAF1, required for normal CLN1 and CLN2 G1 cyclin expression in late G1. Also has a role in chromosome segregation where it appears to be involved in microtubule placement. This is RNA polymerase-associated protein CTR9 (CTR9) from Saccharomyces cerevisiae (strain ATCC 204508 / S288c) (Baker's yeast).